The following is a 357-amino-acid chain: Bcl-2/adenovirus E1B 19 kDa-interacting protein 2-like protein (357 aa).

Residues 32–49 (ELELKEEWQDEEFPRLLP) show a composition bias toward basic and acidic residues. The disordered stretch occupies residues 32–156 (ELELKEEWQD…LPRAEGLGTS (125 aa)). Over residues 105–117 (ASPTQSAPSSPDG) the composition is skewed to polar residues. A compositionally biased stretch (acidic residues) spans 119 to 134 (SDLEIDELETPSDSEQ). Basic and acidic residues predominate over residues 136–149 (DSGHEFEWEDELPR). In terms of domain architecture, CRAL-TRIO spans 191 to 352 (DMTVIEPYKK…AVRQLDRDLH (162 aa)).

In terms of assembly, homodimer. Interacts with BCL2, ARHGAP1, MIF and GFER. In terms of tissue distribution, isoform 2 is expressed in placenta and lung.

Its function is as follows. May be a bridge molecule between BCL2 and ARHGAP1/CDC42 in promoting cell death. The sequence is that of Bcl-2/adenovirus E1B 19 kDa-interacting protein 2-like protein (BNIPL) from Homo sapiens (Human).